Consider the following 83-residue polypeptide: Cytochrome b559 subunit alpha (83 aa).

A helical membrane pass occupies residues 21-35 (VIHSITIPSLFIAGW). Residue His23 coordinates heme.

The protein belongs to the PsbE/PsbF family. In terms of assembly, heterodimer of an alpha subunit and a beta subunit. PSII is composed of 1 copy each of membrane proteins PsbA, PsbB, PsbC, PsbD, PsbE, PsbF, PsbH, PsbI, PsbJ, PsbK, PsbL, PsbM, PsbT, PsbX, PsbY, PsbZ, Psb30/Ycf12, at least 3 peripheral proteins of the oxygen-evolving complex and a large number of cofactors. It forms dimeric complexes. Heme b is required as a cofactor.

It is found in the plastid. The protein localises to the chloroplast thylakoid membrane. In terms of biological role, this b-type cytochrome is tightly associated with the reaction center of photosystem II (PSII). PSII is a light-driven water:plastoquinone oxidoreductase that uses light energy to abstract electrons from H(2)O, generating O(2) and a proton gradient subsequently used for ATP formation. It consists of a core antenna complex that captures photons, and an electron transfer chain that converts photonic excitation into a charge separation. This chain is Cytochrome b559 subunit alpha, found in Chara vulgaris (Common stonewort).